The sequence spans 64 residues: Large ribosomal subunit protein uL29 (64 aa).

Belongs to the universal ribosomal protein uL29 family.

The chain is Large ribosomal subunit protein uL29 from Burkholderia ambifaria (strain MC40-6).